We begin with the raw amino-acid sequence, 436 residues long: 3-ketoacyl-CoA thiolase (436 aa).

Catalysis depends on cysteine 99, which acts as the Acyl-thioester intermediate. Residues histidine 392 and cysteine 422 each act as proton acceptor in the active site.

It belongs to the thiolase-like superfamily. Thiolase family. Heterotetramer of two alpha chains (FadJ) and two beta chains (FadI).

Its subcellular location is the cytoplasm. It catalyses the reaction an acyl-CoA + acetyl-CoA = a 3-oxoacyl-CoA + CoA. The protein operates within lipid metabolism; fatty acid beta-oxidation. Catalyzes the final step of fatty acid oxidation in which acetyl-CoA is released and the CoA ester of a fatty acid two carbons shorter is formed. The chain is 3-ketoacyl-CoA thiolase from Alteromonas mediterranea (strain DSM 17117 / CIP 110805 / LMG 28347 / Deep ecotype).